A 233-amino-acid chain; its full sequence is 7-cyano-7-deazaguanine synthase (233 aa).

Residue L7 to S17 participates in ATP binding. C195, C206, C209, and C212 together coordinate Zn(2+).

The protein belongs to the QueC family. Zn(2+) serves as cofactor.

The enzyme catalyses 7-carboxy-7-deazaguanine + NH4(+) + ATP = 7-cyano-7-deazaguanine + ADP + phosphate + H2O + H(+). The protein operates within purine metabolism; 7-cyano-7-deazaguanine biosynthesis. Catalyzes the ATP-dependent conversion of 7-carboxy-7-deazaguanine (CDG) to 7-cyano-7-deazaguanine (preQ(0)). The chain is 7-cyano-7-deazaguanine synthase from Methanococcus vannielii (strain ATCC 35089 / DSM 1224 / JCM 13029 / OCM 148 / SB).